A 156-amino-acid chain; its full sequence is Protein OXIDATIVE STRESS 3 LIKE 3 (156 aa).

The segment at M1 to S67 is disordered. Residues G13–D26 are compositionally biased toward basic and acidic residues.

Its subcellular location is the nucleus. In terms of biological role, promotes slightly the tolerance to oxidizing chemicals (e.g. diamide). The polypeptide is Protein OXIDATIVE STRESS 3 LIKE 3 (Arabidopsis thaliana (Mouse-ear cress)).